The following is a 208-amino-acid chain: Somatotropin-B (208 aa).

Residues 1–25 form the signal peptide; it reads MVPGSCSSFGLLVILSFQNVPDVGG. Histidine 44 is a binding site for Zn(2+). Cysteine 77 and cysteine 181 are disulfide-bonded. Residue glutamate 190 participates in Zn(2+) binding. A disulfide bond links cysteine 198 and cysteine 206.

This sequence belongs to the somatotropin/prolactin family.

It is found in the secreted. Its function is as follows. Growth hormone plays an important role in growth control. The polypeptide is Somatotropin-B (gh-b) (Xenopus laevis (African clawed frog)).